Here is a 282-residue protein sequence, read N- to C-terminus: E3 ubiquitin-protein ligase RNF217 (282 aa).

The tract at residues 1-218 is TRIAD supradomain; it reads MSCRVCLEDR…LSIFGCKYRY (218 aa). The Zn(2+) site is built by cysteine 3, cysteine 6, cysteine 23, cysteine 26, cysteine 123, cysteine 126, histidine 131, cysteine 136, cysteine 163, and cysteine 166. Residues 3–49 form an RING-type 1 zinc finger; sequence CRVCLEDRSIKPLPCCKKPVCDECLKRYLSSQVQLGQAEIQCPITEC. An IBR-type zinc finger spans residues 68 to 136; that stretch reads IKYKYFLELS…HAPWHEGVNC (69 aa). Residues 163-192 form an RING-type 2; atypical zinc finger; sequence CPRCKVHIQRTEGCDHMTCSQCNTNFCYRC. Cysteine 176 is an active-site residue. Residues cysteine 181, cysteine 184, cysteine 189, cysteine 192, histidine 205, and cysteine 214 each contribute to the Zn(2+) site. The chain crosses the membrane as a helical span at residues 243–263; the sequence is LLIVLGLVLGALAVVIGLFGL.

Belongs to the RBR family. RNF217 subfamily.

The protein localises to the cytoplasm. It is found in the membrane. The enzyme catalyses [E2 ubiquitin-conjugating enzyme]-S-ubiquitinyl-L-cysteine + [acceptor protein]-L-lysine = [E2 ubiquitin-conjugating enzyme]-L-cysteine + [acceptor protein]-N(6)-ubiquitinyl-L-lysine.. It participates in protein modification; protein ubiquitination. Functionally, E3 ubiquitin-protein ligase which accepts ubiquitin from E2 ubiquitin-conjugating enzymes in the form of a thioester and then directly transfers the ubiquitin to targeted substrates. Mediates the degradation of the iron exporter ferroportin/SLC40A1 and thus regulates iron homeostasis. This chain is E3 ubiquitin-protein ligase RNF217 (rnf217), found in Xenopus laevis (African clawed frog).